Reading from the N-terminus, the 594-residue chain is DEAD-box ATP-dependent RNA helicase 25 (594 aa).

Disordered regions lie at residues 56–80 and 92–121; these read RSGGAAVPKRRRSRRDAEEEEEEGL and GVREEGVAEGEAPEFDAAKSGDESGGVDGS. The Q motif motif lies at 126–154; sequence TRFDQCTISPLSLKAVKDAGYERMTQVQE. Residues 157–340 enclose the Helicase ATP-binding domain; the sequence is LPVILQGKDV…HIAMKKNYKF (184 aa). 170 to 177 is an ATP binding site; it reads AKTGTGKT. Residues 288-291 carry the DEAD box motif; sequence DEAD. A Helicase C-terminal domain is found at 370–520; that stretch reads ILYDVLKKHV…SVDSSTQTIV (151 aa).

Belongs to the DEAD box helicase family.

The enzyme catalyses ATP + H2O = ADP + phosphate + H(+). The polypeptide is DEAD-box ATP-dependent RNA helicase 25 (Oryza sativa subsp. japonica (Rice)).